Reading from the N-terminus, the 247-residue chain is Cell division protein ZapD (247 aa).

This sequence belongs to the ZapD family. As to quaternary structure, interacts with FtsZ.

It is found in the cytoplasm. Cell division factor that enhances FtsZ-ring assembly. Directly interacts with FtsZ and promotes bundling of FtsZ protofilaments, with a reduction in FtsZ GTPase activity. The polypeptide is Cell division protein ZapD (Salmonella agona (strain SL483)).